Here is a 58-residue protein sequence, read N- to C-terminus: Conotoxin Im5.4 (58 aa).

The signal sequence occupies residues 1–18 (MRCLPVVVFLLLLLSAAA). A propeptide spanning residues 19–28 (APGVGSKTER) is cleaved from the precursor.

It belongs to the conotoxin T superfamily. Contains 2 disulfide bonds that can be either 'C1-C3, C2-C4' or 'C1-C4, C2-C3', since these disulfide connectivities have been observed for conotoxins with cysteine framework V (for examples, see AC P0DQQ7 and AC P81755). As to expression, expressed by the venom duct.

The protein resides in the secreted. Functionally, probable neurotoxin. In Conus imperialis (Imperial cone), this protein is Conotoxin Im5.4.